A 427-amino-acid polypeptide reads, in one-letter code: Trigger factor (427 aa).

A PPIase FKBP-type domain is found at 163–248 (GDTVVIDFVG…IHEVKTKEVP (86 aa)).

It belongs to the FKBP-type PPIase family. Tig subfamily.

It localises to the cytoplasm. The catalysed reaction is [protein]-peptidylproline (omega=180) = [protein]-peptidylproline (omega=0). Its function is as follows. Involved in protein export. Acts as a chaperone by maintaining the newly synthesized protein in an open conformation. Functions as a peptidyl-prolyl cis-trans isomerase. The sequence is that of Trigger factor from Streptococcus pyogenes serotype M18 (strain MGAS8232).